A 582-amino-acid polypeptide reads, in one-letter code: MAEFLDDQETRLCDNCKKEIPVFNFTIHEIHCQRNIGMCPICKEPFPKSDMETHMAAEHCQVTCKCNKKLEKRLLKKHEETECPLRLAVCQHCDLELSILKLKEHEDYCGARTELCGNCGRNVLVKDLKTHPEVCGREGEEKRNEVAIPPNAYDESWGQDGIWIASQLLRQIEALDPPMRLPQRPLRAFESDVFHDRTTNQRNITAQVSIQNNLFEEQERQERNRGQQPPKEGGEDGANLDFMLALSLQNEGQASSVAEQDFWRAVCEADQSHGGPSSLSDIKGAADETMLPCEFCEELYPEELLIDHQTSCNPSRALPSLNTGSSSPRGVEEHDVIFQNFLQQAASKQLDSLMGLSSSRLVEESIIIPCEFCGVQLEEEVLFHHQDQCDQRPATATNHVTEGIPRLDSQPQENSPELPRRRVRHQGDLSSGYLDDIKQETANGPTSCLPPSRPFNNMTATYNQLSRSTSGPRPGCQPSPPRVLKLNNSDSQDIQGRNQNSQNGAIAPGHISVIRPPQSLYPENIVPSFPHGPAGRYGASGRSEGGRNSRVTPAAANYRSRTAKAKPSKQQGAGDAEEEEEE.

N-acetylalanine is present on A2. The segment at 27 to 103 adopts a TRAF-type zinc-finger fold; sequence IHEIHCQRNI…DLELSILKLK (77 aa). S191 bears the Phosphoserine mark. Residues 216-238 form a disordered region; the sequence is EEQERQERNRGQQPPKEGGEDGA. 8 positions are modified to phosphoserine: S278, S320, S326, S327, S409, S415, S430, and S470. Disordered regions lie at residues 402–509 and 522–582; these read EGIP…IAPG and PENI…EEEE. 2 stretches are compositionally biased toward polar residues: residues 454 to 471 and 486 to 504; these read PFNNMTATYNQLSRSTSG and LNNSDSQDIQGRNQNSQNG.

Interacts with MAVS, TICAM1, TRAF1, TRAF2, TRAF3 and TRAF6.

Its function is as follows. Negative feedback regulator that controls excessive innate immune responses. Regulates both Toll-like receptor 4 (TLR4) and DDX58/RIG1-like helicases (RLH) pathways. May inhibit the LTR pathway by direct interaction with TRAF6 and attenuation of NF-kappa-B activation. May negatively regulate the RLH pathway downstream from MAVS and upstream of NF-kappa-B and IRF3. In Macaca fascicularis (Crab-eating macaque), this protein is TRAF-type zinc finger domain-containing protein 1 (TRAFD1).